A 615-amino-acid polypeptide reads, in one-letter code: DNA mismatch repair protein MutL (615 aa).

A disordered region spans residues 362 to 397 (HFAEPAVREPVAPRYTPAPASGSRPAAPWPNAQPGY). Residues 378 to 391 (PAPASGSRPAAPWP) are compositionally biased toward low complexity.

Belongs to the DNA mismatch repair MutL/HexB family.

Functionally, this protein is involved in the repair of mismatches in DNA. It is required for dam-dependent methyl-directed DNA mismatch repair. May act as a 'molecular matchmaker', a protein that promotes the formation of a stable complex between two or more DNA-binding proteins in an ATP-dependent manner without itself being part of a final effector complex. The sequence is that of DNA mismatch repair protein MutL from Escherichia coli O17:K52:H18 (strain UMN026 / ExPEC).